Consider the following 264-residue polypeptide: S-adenosylmethionine decarboxylase proenzyme (264 aa).

The active-site Schiff-base intermediate with substrate; via pyruvic acid is serine 112. Residue serine 112 is modified to Pyruvic acid (Ser); by autocatalysis. Histidine 117 acts as the Proton acceptor; for processing activity in catalysis. Residue cysteine 140 is the Proton donor; for catalytic activity of the active site.

This sequence belongs to the prokaryotic AdoMetDC family. Type 2 subfamily. Heterooctamer of four alpha and four beta chains arranged as a tetramer of alpha/beta heterodimers. It depends on pyruvate as a cofactor. Post-translationally, is synthesized initially as an inactive proenzyme. Formation of the active enzyme involves a self-maturation process in which the active site pyruvoyl group is generated from an internal serine residue via an autocatalytic post-translational modification. Two non-identical subunits are generated from the proenzyme in this reaction, and the pyruvate is formed at the N-terminus of the alpha chain, which is derived from the carboxyl end of the proenzyme. The post-translation cleavage follows an unusual pathway, termed non-hydrolytic serinolysis, in which the side chain hydroxyl group of the serine supplies its oxygen atom to form the C-terminus of the beta chain, while the remainder of the serine residue undergoes an oxidative deamination to produce ammonia and the pyruvoyl group blocking the N-terminus of the alpha chain.

It carries out the reaction S-adenosyl-L-methionine + H(+) = S-adenosyl 3-(methylsulfanyl)propylamine + CO2. It functions in the pathway amine and polyamine biosynthesis; S-adenosylmethioninamine biosynthesis; S-adenosylmethioninamine from S-adenosyl-L-methionine: step 1/1. Functionally, catalyzes the decarboxylation of S-adenosylmethionine to S-adenosylmethioninamine (dcAdoMet), the propylamine donor required for the synthesis of the polyamines spermine and spermidine from the diamine putrescine. The chain is S-adenosylmethionine decarboxylase proenzyme from Pectobacterium atrosepticum (strain SCRI 1043 / ATCC BAA-672) (Erwinia carotovora subsp. atroseptica).